The chain runs to 287 residues: MKTKLQYYLPKMLITKFFGWLAEKKAGIITYWIILFFIKIYKINLKEIKTKDIKSYNTFNDFFSRRIKIDCRRIDYDPSIIICPADGIITNFGYIENTEKLQLKNHNYTLKSLLAQNETMIDIFQHGIFFTTYLSPKNYHRIHMPCDGSLIKMIYVPGQLFSVNLKFYKNISNIFSKNERVICLFKTNFGYMIQILVGSIISGTISTSWYGKINYKRDGIIKLWKYNINSNNKPIFLKKGDEMGFFTLGSTVITLFSKKNILIKENLSNYKEVRVGDVLAYGIQNVK.

Residues Asp86, His143, and Ser250 each act as charge relay system; for autoendoproteolytic cleavage activity in the active site. Catalysis depends on Ser250, which acts as the Schiff-base intermediate with substrate; via pyruvic acid; for decarboxylase activity. A Pyruvic acid (Ser); by autocatalysis modification is found at Ser250.

It belongs to the phosphatidylserine decarboxylase family. PSD-B subfamily. Prokaryotic type I sub-subfamily. Heterodimer of a large membrane-associated beta subunit and a small pyruvoyl-containing alpha subunit. Pyruvate serves as cofactor. Is synthesized initially as an inactive proenzyme. Formation of the active enzyme involves a self-maturation process in which the active site pyruvoyl group is generated from an internal serine residue via an autocatalytic post-translational modification. Two non-identical subunits are generated from the proenzyme in this reaction, and the pyruvate is formed at the N-terminus of the alpha chain, which is derived from the carboxyl end of the proenzyme. The autoendoproteolytic cleavage occurs by a canonical serine protease mechanism, in which the side chain hydroxyl group of the serine supplies its oxygen atom to form the C-terminus of the beta chain, while the remainder of the serine residue undergoes an oxidative deamination to produce ammonia and the pyruvoyl prosthetic group on the alpha chain. During this reaction, the Ser that is part of the protease active site of the proenzyme becomes the pyruvoyl prosthetic group, which constitutes an essential element of the active site of the mature decarboxylase.

Its subcellular location is the cell membrane. The catalysed reaction is a 1,2-diacyl-sn-glycero-3-phospho-L-serine + H(+) = a 1,2-diacyl-sn-glycero-3-phosphoethanolamine + CO2. It functions in the pathway phospholipid metabolism; phosphatidylethanolamine biosynthesis; phosphatidylethanolamine from CDP-diacylglycerol: step 2/2. Its function is as follows. Catalyzes the formation of phosphatidylethanolamine (PtdEtn) from phosphatidylserine (PtdSer). In Wigglesworthia glossinidia brevipalpis, this protein is Phosphatidylserine decarboxylase proenzyme.